We begin with the raw amino-acid sequence, 117 residues long: Large ribosomal subunit protein bL20 (117 aa).

This sequence belongs to the bacterial ribosomal protein bL20 family.

Binds directly to 23S ribosomal RNA and is necessary for the in vitro assembly process of the 50S ribosomal subunit. It is not involved in the protein synthesizing functions of that subunit. The protein is Large ribosomal subunit protein bL20 of Carboxydothermus hydrogenoformans (strain ATCC BAA-161 / DSM 6008 / Z-2901).